The chain runs to 30 residues: Cyclotide hypa-A (30 aa).

The cyclopeptide (Gly-Asn) cross-link spans 1–30 (GIPCAESCVYIPCTITALLGCSCKNKVCYN). Cystine bridges form between Cys-4–Cys-21, Cys-8–Cys-23, and Cys-13–Cys-28.

In terms of processing, this is a cyclic peptide.

Probably participates in a plant defense mechanism. In Pombalia parviflora (Violetilla), this protein is Cyclotide hypa-A.